A 181-amino-acid polypeptide reads, in one-letter code: ADP-ribosylation factor 1 (181 aa).

Residue glycine 2 is the site of N-myristoyl glycine attachment. Residues 24 to 31 (GLDAAGKT), 67 to 71 (DVGGQ), and 126 to 129 (NKQD) each bind GTP.

Belongs to the small GTPase superfamily. Arf family. In terms of tissue distribution, seedling shoots.

The protein localises to the golgi apparatus. It carries out the reaction GTP + H2O = GDP + phosphate + H(+). Its function is as follows. GTP-binding protein involved in protein trafficking; may modulate vesicle budding and uncoating within the Golgi apparatus. The protein is ADP-ribosylation factor 1 of Oryza sativa subsp. japonica (Rice).